The sequence spans 490 residues: Putative alanine aminotransferase (490 aa).

Residues alanine 157, serine 158, tyrosine 183, asparagine 239, and serine 308 each coordinate pyridoxal 5'-phosphate. Lysine 311 carries the post-translational modification N6-(pyridoxal phosphate)lysine. Arginine 320 is a pyridoxal 5'-phosphate binding site.

Belongs to the class-I pyridoxal-phosphate-dependent aminotransferase family. Alanine aminotransferase subfamily. In terms of assembly, homodimer. The cofactor is pyridoxal 5'-phosphate.

Its subcellular location is the cytoplasm. The protein localises to the mitochondrion. The catalysed reaction is L-alanine + 2-oxoglutarate = pyruvate + L-glutamate. It participates in amino-acid degradation; L-alanine degradation via transaminase pathway; pyruvate from L-alanine: step 1/1. In terms of biological role, alanine aminotransferase involved in both alanine biosynthesis and utilization. In Schizosaccharomyces pombe (strain 972 / ATCC 24843) (Fission yeast), this protein is Putative alanine aminotransferase (alt1).